A 168-amino-acid polypeptide reads, in one-letter code: Photosystem I assembly protein Ycf3 (168 aa).

TPR repeat units follow at residues 35-68 (AFTY…EIDP), 72-105 (SYIL…NPFL), and 120-153 (GEQA…TPGN).

It belongs to the Ycf3 family.

The protein resides in the plastid membrane. Essential for the assembly of the photosystem I (PSI) complex. May act as a chaperone-like factor to guide the assembly of the PSI subunits. The chain is Photosystem I assembly protein Ycf3 from Cuscuta reflexa (Southern Asian dodder).